A 155-amino-acid chain; its full sequence is IFN signaling evasion protein OPG029 (155 aa).

This sequence belongs to the orthopoxvirus OPG029 family. As to quaternary structure, interacts with host TANK, TBKBP1 and AZI2; these interactions prevent interferon production. Interacts with host STAT2.

Prevents establishment of cellular antiviral state by blocking virus-induced phosphorylation and activation of interferon regulatory factors 3/IRF3 and 7/IRF7, transcription factors critical for the induction of interferons alpha and beta. This blockage is produced through the inhibition of host TBK1, by binding host TBK1 adapter proteins TBKBP1 and AZI2, thereby producing a strong inhibition of the phosphorylation and activation of IRF3 and IRF7. Also acts as an inhibitor of the cellular response to type I IFN by interacting with host STAT2. Mechanistically, exerts its inhibitory effect after host ISGF3 complex (composed of STAT1, STAT2 and IRF9) binding to the interferon stimulated response element (ISRE). The sequence is that of IFN signaling evasion protein OPG029 (OPG019) from Cynomys gunnisoni (Gunnison's prairie dog).